Here is a 332-residue protein sequence, read N- to C-terminus: Glycerol-3-phosphate dehydrogenase [NAD(P)+] (332 aa).

Residues Trp-11, Arg-30, and Lys-108 each contribute to the NADPH site. Sn-glycerol 3-phosphate contacts are provided by Lys-108, Gly-137, and Ser-139. Ala-141 provides a ligand contact to NADPH. Sn-glycerol 3-phosphate contacts are provided by Lys-192, Asp-245, Ser-255, Arg-256, and Asn-257. The Proton acceptor role is filled by Lys-192. An NADPH-binding site is contributed by Arg-256. Val-280 and Glu-282 together coordinate NADPH.

The protein belongs to the NAD-dependent glycerol-3-phosphate dehydrogenase family.

It is found in the cytoplasm. The catalysed reaction is sn-glycerol 3-phosphate + NAD(+) = dihydroxyacetone phosphate + NADH + H(+). It catalyses the reaction sn-glycerol 3-phosphate + NADP(+) = dihydroxyacetone phosphate + NADPH + H(+). Its pathway is membrane lipid metabolism; glycerophospholipid metabolism. Catalyzes the reduction of the glycolytic intermediate dihydroxyacetone phosphate (DHAP) to sn-glycerol 3-phosphate (G3P), the key precursor for phospholipid synthesis. The polypeptide is Glycerol-3-phosphate dehydrogenase [NAD(P)+] (Paraburkholderia phymatum (strain DSM 17167 / CIP 108236 / LMG 21445 / STM815) (Burkholderia phymatum)).